The primary structure comprises 352 residues: NADH-ubiquinone oxidoreductase chain 2 (352 aa).

11 helical membrane passes run M4–E24, W26–F46, F60–F80, L96–P116, F124–Y144, F150–L170, I178–L198, L205–F225, I241–I261, G274–L294, and L330–I350.

Belongs to the complex I subunit 2 family.

It is found in the mitochondrion inner membrane. It carries out the reaction a ubiquinone + NADH + 5 H(+)(in) = a ubiquinol + NAD(+) + 4 H(+)(out). Its function is as follows. Core subunit of the mitochondrial membrane respiratory chain NADH dehydrogenase (Complex I) that is believed to belong to the minimal assembly required for catalysis. Complex I functions in the transfer of electrons from NADH to the respiratory chain. The immediate electron acceptor for the enzyme is believed to be ubiquinone. This is NADH-ubiquinone oxidoreductase chain 2 (ND2) from Paracentrotus lividus (Common sea urchin).